Here is a 291-residue protein sequence, read N- to C-terminus: 4-hydroxy-tetrahydrodipicolinate synthase (291 aa).

Threonine 44 lines the pyruvate pocket. Tyrosine 132 serves as the catalytic Proton donor/acceptor. Lysine 160 (schiff-base intermediate with substrate) is an active-site residue. Isoleucine 202 contributes to the pyruvate binding site.

The protein belongs to the DapA family. In terms of assembly, homotetramer; dimer of dimers.

The protein resides in the cytoplasm. The catalysed reaction is L-aspartate 4-semialdehyde + pyruvate = (2S,4S)-4-hydroxy-2,3,4,5-tetrahydrodipicolinate + H2O + H(+). The protein operates within amino-acid biosynthesis; L-lysine biosynthesis via DAP pathway; (S)-tetrahydrodipicolinate from L-aspartate: step 3/4. Functionally, catalyzes the condensation of (S)-aspartate-beta-semialdehyde [(S)-ASA] and pyruvate to 4-hydroxy-tetrahydrodipicolinate (HTPA). This chain is 4-hydroxy-tetrahydrodipicolinate synthase, found in Syntrophobacter fumaroxidans (strain DSM 10017 / MPOB).